Here is a 112-residue protein sequence, read N- to C-terminus: Small ribosomal subunit protein uS11c (112 aa).

It belongs to the universal ribosomal protein uS11 family. In terms of assembly, part of the 30S ribosomal subunit.

Its subcellular location is the plastid. The sequence is that of Small ribosomal subunit protein uS11c from Euglena longa (Euglenophycean alga).